The primary structure comprises 239 residues: Large ribosomal subunit protein uL1 (239 aa).

It belongs to the universal ribosomal protein uL1 family. As to quaternary structure, part of the 50S ribosomal subunit.

In terms of biological role, binds directly to 23S rRNA. The L1 stalk is quite mobile in the ribosome, and is involved in E site tRNA release. Functionally, protein L1 is also a translational repressor protein, it controls the translation of the L11 operon by binding to its mRNA. In Rickettsia akari (strain Hartford), this protein is Large ribosomal subunit protein uL1.